The chain runs to 390 residues: Homoserine O-succinyltransferase (390 aa).

An AB hydrolase-1 domain is found at 59-369 (NAVLVCHALN…PHGHDAFLLD (311 aa)). Ser165 (nucleophile) is an active-site residue. Residue Arg235 coordinates substrate. Residues Asp330 and His363 contribute to the active site. A substrate-binding site is contributed by Asp364.

It belongs to the AB hydrolase superfamily. MetX family. In terms of assembly, homodimer.

It localises to the cytoplasm. The enzyme catalyses L-homoserine + succinyl-CoA = O-succinyl-L-homoserine + CoA. Its pathway is amino-acid biosynthesis; L-methionine biosynthesis via de novo pathway; O-succinyl-L-homoserine from L-homoserine: step 1/1. Functionally, transfers a succinyl group from succinyl-CoA to L-homoserine, forming succinyl-L-homoserine. This chain is Homoserine O-succinyltransferase, found in Cupriavidus pinatubonensis (strain JMP 134 / LMG 1197) (Cupriavidus necator (strain JMP 134)).